Here is a 481-residue protein sequence, read N- to C-terminus: Argininosuccinate lyase (481 aa).

The protein belongs to the lyase 1 family. Argininosuccinate lyase subfamily.

The protein resides in the cytoplasm. It carries out the reaction 2-(N(omega)-L-arginino)succinate = fumarate + L-arginine. Its pathway is amino-acid biosynthesis; L-arginine biosynthesis; L-arginine from L-ornithine and carbamoyl phosphate: step 3/3. This chain is Argininosuccinate lyase, found in Methanococcus maripaludis (strain C6 / ATCC BAA-1332).